Reading from the N-terminus, the 90-residue chain is Auxin-responsive protein SAUR19 (90 aa).

This sequence belongs to the ARG7 family. In terms of assembly, interacts with and inhibits PP2C-D subfamily of type 2C phosphatases such as PP2C67/PP2C-D1, PP2C64/PP2C-D5 and PP2C46/PP2C-D6.

The protein localises to the cell membrane. Its function is as follows. Provide a mechanistic link between auxin and plasma membrane H(+)-ATPases (PM H(+)-ATPases, e.g. AHA1 and AHA2), and triggers PM H(+)-ATPases activity by promoting phosphorylation of their C-terminal autoinhibitory domain as a result of PP2C-D subfamily of type 2C phosphatases inhibition, thus leading to the acidification of the apoplast and the facilitation of solutes and water uptake to drive cell expansion. Prevents the apical hook maintenance of etiolated seedlings. Functions as positive effectors of cell expansion through modulation of auxin transport. This Arabidopsis thaliana (Mouse-ear cress) protein is Auxin-responsive protein SAUR19.